Consider the following 108-residue polypeptide: Ig kappa chain V region K-25 (108 aa).

The framework-1 stretch occupies residues A1–C23. A complementarity-determining-1 region spans residues Q24–S34. The interval W35–Y49 is framework-2. Positions K50 to S56 are complementarity-determining-2. The framework-3 stretch occupies residues G57–C88. The tract at residues Q89–Y97 is complementarity-determining-3. The interval F98–K107 is framework-4.

The polypeptide is Ig kappa chain V region K-25 (Oryctolagus cuniculus (Rabbit)).